The following is a 229-amino-acid chain: UPF0758 protein CA_C1241 (229 aa).

An MPN domain is found at 107-229 (KITSPKEAAN…YISLKEEGLL (123 aa)). Residues H178, H180, and D191 each coordinate Zn(2+). A JAMM motif motif is present at residues 178-191 (HNHPSGDPKPSNED).

It belongs to the UPF0758 family.

The chain is UPF0758 protein CA_C1241 from Clostridium acetobutylicum (strain ATCC 824 / DSM 792 / JCM 1419 / IAM 19013 / LMG 5710 / NBRC 13948 / NRRL B-527 / VKM B-1787 / 2291 / W).